A 260-amino-acid chain; its full sequence is Hydroxyethylthiazole kinase 1 (260 aa).

Met39 provides a ligand contact to substrate. ATP-binding residues include Arg115 and Thr160. Gly187 serves as a coordination point for substrate.

The protein belongs to the Thz kinase family. Mg(2+) is required as a cofactor.

The enzyme catalyses 5-(2-hydroxyethyl)-4-methylthiazole + ATP = 4-methyl-5-(2-phosphooxyethyl)-thiazole + ADP + H(+). Its pathway is cofactor biosynthesis; thiamine diphosphate biosynthesis; 4-methyl-5-(2-phosphoethyl)-thiazole from 5-(2-hydroxyethyl)-4-methylthiazole: step 1/1. In terms of biological role, catalyzes the phosphorylation of the hydroxyl group of 4-methyl-5-beta-hydroxyethylthiazole (THZ). The chain is Hydroxyethylthiazole kinase 1 from Streptococcus pneumoniae serotype 19F (strain G54).